The sequence spans 174 residues: Mating-type protein ALPHA2 (174 aa).

Positions 108 to 170 form a DNA-binding region, homeobox; TALE-type; sequence QPYRGHRFTK…NRRRKQKHPP (63 aa).

The protein belongs to the TALE/M-ATYP homeobox family. In terms of assembly, forms a heterodimer with A1.

The protein resides in the nucleus. Mating type proteins are sequence specific DNA-binding proteins that act as master switches in yeast differentiation by controlling gene expression in a cell type-specific fashion. Transcriptional corepressor that acts in conjunction with A1 to repress transcription of haploid-specific genes and of MATALPHA1. This chain is Mating-type protein ALPHA2 (MATALPHA2), found in Nakaseomyces delphensis (Yeast).